The sequence spans 205 residues: Arginine exporter protein ArgO (205 aa).

The next 6 helical transmembrane spans lie at 1 to 21 (MLAV…PLGP), 37 to 57 (LMVA…GIFG), 68 to 88 (LLAL…WGAF), 112 to 132 (VVTM…TFVV), 147 to 167 (WFAL…ALLA), and 182 to 202 (IINT…AWQG).

This sequence belongs to the LysE/ArgO transporter (TC 2.A.75) family.

It localises to the cell inner membrane. It carries out the reaction L-arginine(in) = L-arginine(out). Involved in the export of arginine. Important to control the intracellular level of arginine and the correct balance between arginine and lysine. This Serratia proteamaculans (strain 568) protein is Arginine exporter protein ArgO.